The sequence spans 475 residues: Ankyrin repeat, SAM and basic leucine zipper domain-containing protein 1 (475 aa).

The span at 1–10 (MAAGALRGLA) shows a compositional bias: low complexity. The segment at 1-23 (MAAGALRGLAVAGGGESSESEDD) is disordered. Residues S17, S18, and S20 each carry the phosphoserine modification. 6 ANK repeats span residues 45–74 (EKNE…SVDS), 78–107 (YGWT…NASF), 110–144 (DKQT…DPNV), 148–177 (RLMT…EVNT), 181–210 (NGYT…NKML), and 214–243 (DGKI…PLEG). The region spanning 272-334 (SYTAFGDLEI…KILSALKELE (63 aa)) is the SAM domain.

Interacts with DDX4, PIWIL1, RANBP9 and TDRD1.

The protein resides in the cytoplasm. In terms of biological role, plays a central role during spermatogenesis by repressing transposable elements and preventing their mobilization, which is essential for the germline integrity. Acts via the piRNA metabolic process, which mediates the repression of transposable elements during meiosis by forming complexes composed of piRNAs and Piwi proteins and governs the methylation and subsequent repression of transposons. Its association with pi-bodies suggests a participation in the primary piRNAs metabolic process. Required prior to the pachytene stage to facilitate the production of multiple types of piRNAs, including those associated with repeats involved in the regulation of retrotransposons. May act by mediating protein-protein interactions during germ cell maturation. This chain is Ankyrin repeat, SAM and basic leucine zipper domain-containing protein 1 (ASZ1), found in Otolemur garnettii (Small-eared galago).